A 287-amino-acid polypeptide reads, in one-letter code: Oxaloacetate decarboxylase (287 aa).

Residue Ser50 coordinates substrate. Asp88 contacts Mg(2+). 2 residues coordinate substrate: Arg159 and His235.

It belongs to the isocitrate lyase/PEP mutase superfamily. Oxaloacetate decarboxylase family. In terms of assembly, homotetramer; dimer of dimers. Mg(2+) serves as cofactor.

It carries out the reaction oxaloacetate + H(+) = pyruvate + CO2. In terms of biological role, catalyzes the decarboxylation of oxaloacetate into pyruvate. Seems to play a role in maintaining cellular concentrations of bicarbonate and pyruvate. The polypeptide is Oxaloacetate decarboxylase (Chromohalobacter salexigens (strain ATCC BAA-138 / DSM 3043 / CIP 106854 / NCIMB 13768 / 1H11)).